Here is a 510-residue protein sequence, read N- to C-terminus: Beta-glucosidase 40 (510 aa).

Residues 1-29 form the signal peptide; sequence MAHRRLIMTMTKMMMMVTMMMMMDKTCIC. Residues glutamine 51, histidine 152, and 197–198 each bind a beta-D-glucoside; that span reads NE. Glutamate 198 serves as the catalytic Proton donor. The cysteines at positions 217 and 225 are disulfide-linked. 2 N-linked (GlcNAc...) asparagine glycosylation sites follow: asparagine 229 and asparagine 278. Residue tyrosine 341 participates in a beta-D-glucoside binding. An N-linked (GlcNAc...) asparagine glycan is attached at asparagine 349. A beta-D-glucoside is bound by residues glutamate 414, tryptophan 464, 471–472, and phenylalanine 480; that span reads EW. Catalysis depends on glutamate 414, which acts as the Nucleophile. N-linked (GlcNAc...) asparagine glycosylation is present at asparagine 507.

It belongs to the glycosyl hydrolase 1 family.

The enzyme catalyses Hydrolysis of terminal, non-reducing beta-D-glucosyl residues with release of beta-D-glucose.. This chain is Beta-glucosidase 40, found in Arabidopsis thaliana (Mouse-ear cress).